A 296-amino-acid polypeptide reads, in one-letter code: MNDILSIAPRDKAEILAQALPYIRKFHGKTMVIKYGGNAMTDPALQADFAEDVVLLKLVGMNPVVVHGGGPQIETALNRLGKKGEFIQGMRVTDAETMEVVEWVLAGEVQQDIVGLIHQAGGKAVGLTGRDGGLIRARKLKMVDNKDPNIEYDVGQVGDIVSIDPSVVRALQDDAFIPVISPIGFGEENESYNINADVVASKLATVLQAEKLVLLTNTPGVLDKAGSLLTDLTAREIDALFADGTISGGMLPKISGALDAAKAGVNAVHIIDGRVPHAMLLEILTDQAYGTMIRSH.

Residues 69–70 (GG), arginine 91, and asparagine 193 contribute to the substrate site.

The protein belongs to the acetylglutamate kinase family. ArgB subfamily.

It is found in the cytoplasm. The enzyme catalyses N-acetyl-L-glutamate + ATP = N-acetyl-L-glutamyl 5-phosphate + ADP. It participates in amino-acid biosynthesis; L-arginine biosynthesis; N(2)-acetyl-L-ornithine from L-glutamate: step 2/4. In terms of biological role, catalyzes the ATP-dependent phosphorylation of N-acetyl-L-glutamate. This chain is Acetylglutamate kinase, found in Delftia acidovorans (strain DSM 14801 / SPH-1).